The following is a 456-amino-acid chain: MRNSWIQPRIGQKNITQMNFAKNGHITEEMNYVAKKENLPPSLIMEEVARGRLIIPANVNHVNLEPMAIGIASKCKVNANIGASPNASDINEEVEKLKLAVKYGADTVMDLSTGGVNLDEVRQAIIKESSVPIGTVPVYQALESAHGSIERLTEDDFLHIIEKHCQQGVDYQTIHAGLLIEHLPKVKGRITGIVSRGGGILAQWMLHHFKQNPLYTRFDDICEIFKKYDCTFSLGDSLRPGCLHDASDDAQLAELKTLGELTRRAWTHNVQVMVEGPGHVPMDQIEFNVRKQMEECSEAPFYVLGPLVTDISPGYDHISSAIGAAMAGWYGTAMLCYVTPKEHLGLPNAEDVREGLIAYKIAAHAADIARHRAGARDRDDELSHARYNFDWNKQFELSLDPERAKQYHDETLPEEIFKKAEFCSMCGPNHCPMNSKISDETLDELNNKLTKCDTSV.

Residues Asn80, Met109, Tyr139, His175, 195–197 (SRG), 236–239 (DSLR), and Glu275 contribute to the substrate site. His279 lines the Zn(2+) pocket. Tyr302 contributes to the substrate binding site. Position 343 (His343) interacts with Zn(2+). [4Fe-4S] cluster-binding residues include Cys423, Cys426, and Cys431.

The protein belongs to the ThiC family. Requires [4Fe-4S] cluster as cofactor.

The catalysed reaction is 5-amino-1-(5-phospho-beta-D-ribosyl)imidazole + S-adenosyl-L-methionine = 4-amino-2-methyl-5-(phosphooxymethyl)pyrimidine + CO + 5'-deoxyadenosine + formate + L-methionine + 3 H(+). It functions in the pathway cofactor biosynthesis; thiamine diphosphate biosynthesis. Functionally, catalyzes the synthesis of the hydroxymethylpyrimidine phosphate (HMP-P) moiety of thiamine from aminoimidazole ribotide (AIR) in a radical S-adenosyl-L-methionine (SAM)-dependent reaction. This chain is Phosphomethylpyrimidine synthase, found in Prochlorococcus marinus subsp. pastoris (strain CCMP1986 / NIES-2087 / MED4).